The following is a 145-amino-acid chain: 6-pyruvoyl tetrahydrobiopterin synthase (145 aa).

Residue serine 19 is modified to Phosphoserine. Histidine 24 serves as a coordination point for Zn(2+). Serine 28 is modified (phosphoserine). Residue cysteine 43 is the Proton acceptor of the active site. 2 residues coordinate Zn(2+): histidine 49 and histidine 51. Histidine 90 serves as the catalytic Charge relay system. Tyrosine 128 carries the phosphotyrosine modification. Glutamate 134 acts as the Charge relay system in catalysis.

Belongs to the PTPS family. In terms of assembly, homohexamer formed of two homotrimers in a head to head fashion. Zn(2+) is required as a cofactor. Phosphorylation of Ser-19 is required for maximal enzyme activity.

The enzyme catalyses 7,8-dihydroneopterin 3'-triphosphate = 6-pyruvoyl-5,6,7,8-tetrahydropterin + triphosphate + H(+). The protein operates within cofactor biosynthesis; tetrahydrobiopterin biosynthesis; tetrahydrobiopterin from 7,8-dihydroneopterin triphosphate: step 1/3. In terms of biological role, involved in the biosynthesis of tetrahydrobiopterin, an essential cofactor of aromatic amino acid hydroxylases. Catalyzes the transformation of 7,8-dihydroneopterin triphosphate into 6-pyruvoyl tetrahydropterin. In Pongo abelii (Sumatran orangutan), this protein is 6-pyruvoyl tetrahydrobiopterin synthase (PTS).